The following is a 1523-amino-acid chain: Slit homolog 3 protein (1523 aa).

Positions Met1–Ala33 are cleaved as a signal peptide. In terms of domain architecture, LRRNT spans Cys34–Arg61. LRR repeat units follow at residues Asn62–Gly83, Asn86–Asp107, Gln110–Ser131, Lys134–Gly155, Gly158–Ala179, and Asp182–His203. N-linked (GlcNAc...) asparagine glycosylation is present at Asn72. Residue Asn192 is glycosylated (N-linked (GlcNAc...) asparagine). Residues Asn215–Gly265 enclose the LRRCT 1 domain. The LRRNT 2 domain maps to Pro271–Glu307. Cys284 and Cys293 are disulfide-bonded. 5 LRR repeats span residues Gly308–Gln329, Lys332–Gly353, Ser356–Gly377, Ser380–Asp401, and Asn404–Pro425. An LRRCT 2 domain is found at Asn437–Gly487. 4 disulfides stabilise this stretch: Cys441–Cys464, Cys443–Cys485, Cys505–Cys511, and Cys509–Cys518. The LRRNT 3 domain maps to Ser496 to Glu532. 5 LRR repeats span residues Tyr533–Lys554, Asn558–Gly579, Gly582–Gly603, Ser606–Gly627, and Ser630–Thr651. Asn563 carries N-linked (GlcNAc...) asparagine glycosylation. Asn622 carries an N-linked (GlcNAc...) asparagine glycan. In terms of domain architecture, LRRCT 3 spans Asn663–Gly713. Disulfide bonds link Cys667–Cys690 and Cys669–Cys711. In terms of domain architecture, LRRNT 4 spans Glu716–Lys752. 4 LRR repeats span residues Asp753–Phe774, Gln776–Asn797, His800–Gly821, and Ser824–Asp845. N-linked (GlcNAc...) asparagine glycans are attached at residues Asn784, Asn792, and Asn797. The region spanning Asn857–Gly907 is the LRRCT 4 domain. EGF-like domains lie at Asn918–Thr953, Pro955–Glu994, Asn996–Asp1032, Val1034–Glu1072, Asn1074–Glu1110, and Gln1119–Glu1155. Disulfide bonds link Cys920-Cys931, Cys925-Cys941, Cys943-Cys952, Cys959-Cys970, Cys964-Cys982, Cys984-Cys993, Cys1000-Cys1011, Cys1005-Cys1020, Cys1022-Cys1031, Cys1038-Cys1051, Cys1045-Cys1060, Cys1062-Cys1071, Cys1078-Cys1089, Cys1083-Cys1098, Cys1100-Cys1109, Cys1123-Cys1134, Cys1128-Cys1143, and Cys1145-Cys1154. N-linked (GlcNAc...) asparagine glycosylation occurs at Asn928. The N-linked (GlcNAc...) asparagine glycan is linked to Asn1025. One can recognise a Laminin G-like domain in the interval Ile1158–Cys1332. N-linked (GlcNAc...) asparagine glycosylation is found at Asn1181 and Asn1247. Intrachain disulfides connect Cys1305-Cys1332, Cys1355-Cys1364, Cys1372-Cys1382, Cys1377-Cys1391, and Cys1393-Cys1402. 2 consecutive EGF-like domains span residues His1340–Asp1365 and Ala1368–Asp1403. Asn1406 carries an N-linked (GlcNAc...) asparagine glycan. An EGF-like 9 domain is found at Ser1408 to Glu1444. 7 cysteine pairs are disulfide-bonded: Cys1412-Cys1422, Cys1417-Cys1432, Cys1434-Cys1443, Cys1449-Cys1487, Cys1467-Cys1501, Cys1478-Cys1517, and Cys1482-Cys1519. Residues Cys1449 to Ser1523 enclose the CTCK domain.

It localises to the secreted. Its function is as follows. May act as molecular guidance cue in cellular migration, and function may be mediated by interaction with roundabout homolog receptors. This is Slit homolog 3 protein (Slit3) from Mus musculus (Mouse).